The sequence spans 210 residues: Sortase A (210 aa).

Topologically, residues 1 to 5 (MNKQR) are cytoplasmic. A helical transmembrane segment spans residues 6 to 26 (IYSIVAILLFVVGGVLIGKPF). Residues 27–210 (YDGYQAEKKQ…GDLVGTKAKK (184 aa)) lie on the Extracellular side of the membrane. The Proton donor/acceptor role is filled by H126. The active-site Acyl-thioester intermediate is C187.

It belongs to the bacterial sortase family. Class A subfamily.

It is found in the cell membrane. Inhibited by thiol-reactive reagents. Transpeptidase that anchors surface proteins to the cell wall. Recognizes and modifies its substrate by proteolytic cleavage of a C-terminal sorting signal. Following cleavage, a covalent intermediate is formed via a thioester bond between the sortase and its substrate, which is then transferred and covalently attached to the cell wall. This sortase recognizes a Leu-Pro-x-Thr-Gly (LPXTG) motif, which is cleaved by the sortase between the threonine and glycine residues. Important for growth in macrophages. May be critical in the early stages of inhalation anthrax. The protein is Sortase A of Bacillus anthracis.